Reading from the N-terminus, the 133-residue chain is Profilin-1 (133 aa).

An intrachain disulfide couples Cys-95 to Cys-117.

The protein belongs to the profilin family. As to quaternary structure, dimer and tetramer. Occurs in many kinds of cells as a complex with monomeric actin in a 1:1 ratio.

The protein localises to the cytoplasm. It localises to the cytoskeleton. Binds to actin and affects the structure of the cytoskeleton. At high concentrations, profilin prevents the polymerization of actin, whereas it enhances it at low concentrations. By binding to PIP2, it inhibits the formation of IP3 and DG. Possesses high binding affinity for poly(L-proline). The polypeptide is Profilin-1 (Artemisia vulgaris (Mugwort)).